Reading from the N-terminus, the 486-residue chain is tRNA-2-methylthio-N(6)-dimethylallyladenosine synthase (486 aa).

The 117-residue stretch at arginine 35–serine 151 folds into the MTTase N-terminal domain. [4Fe-4S] cluster is bound by residues cysteine 44, cysteine 80, cysteine 114, cysteine 189, cysteine 193, and cysteine 196. Residues asparagine 175–glutamate 419 enclose the Radical SAM core domain. The TRAM domain occupies leucine 422 to threonine 485.

Belongs to the methylthiotransferase family. MiaB subfamily. In terms of assembly, monomer. It depends on [4Fe-4S] cluster as a cofactor.

It localises to the cytoplasm. It carries out the reaction N(6)-dimethylallyladenosine(37) in tRNA + (sulfur carrier)-SH + AH2 + 2 S-adenosyl-L-methionine = 2-methylsulfanyl-N(6)-dimethylallyladenosine(37) in tRNA + (sulfur carrier)-H + 5'-deoxyadenosine + L-methionine + A + S-adenosyl-L-homocysteine + 2 H(+). Catalyzes the methylthiolation of N6-(dimethylallyl)adenosine (i(6)A), leading to the formation of 2-methylthio-N6-(dimethylallyl)adenosine (ms(2)i(6)A) at position 37 in tRNAs that read codons beginning with uridine. The chain is tRNA-2-methylthio-N(6)-dimethylallyladenosine synthase from Amoebophilus asiaticus (strain 5a2).